The chain runs to 351 residues: MNKARYTQDVPEDRIKLLESIASYNKPFTLMVVGGVDSGKSTLITFLGNELLSLGFKVAVVDSDVGQKGVLPPGTISLAIPEGPFESMSELEGVAHYFVGTTAPSQFIGEMAVGVKRMVEIARNVADVVLIDTTGFVTGVGAEMKRLKAELVKPDIIAVIHSGELSGLVKALEPYGGVIELAVSETVKRYPLEERRNLRAEKWRNYFRDSQLVEFSASEVAITGTSLFHGIPLNADENELLEKAFGWLVVAGWKNKGYTVVKADVEKFPRAHSRELKAIDFEKLSNLLVGLIDGEGLCMGVGVLKWINFSEGRLQILTPVRDLSGVREIRFGRIRVTEEGEELGLLRRDEL.

An ATP-binding site is contributed by 34–41 (GGVDSGKS).

Requires a divalent metal cation as cofactor.

It carries out the reaction a 5'-end dephospho-2'-deoxyribonucleoside-DNA + ATP = a 5'-end 5'-phospho-2'-deoxyribonucleoside-DNA + ADP + H(+). The catalysed reaction is a 5'-end dephospho-ribonucleoside-RNA + ATP = a 5'-end 5'-phospho-ribonucleoside-RNA + ADP + H(+). In terms of biological role, polynucleotide kinase that can phosphorylate the 5'-hydroxyl groups of both single-stranded RNA (ssRNA) and single-stranded DNA (ssDNA). Exhibits a strong preference for ssRNA. The polypeptide is Polyribonucleotide 5'-hydroxyl-kinase TK1956 (Thermococcus kodakarensis (strain ATCC BAA-918 / JCM 12380 / KOD1) (Pyrococcus kodakaraensis (strain KOD1))).